The chain runs to 292 residues: 11-beta-hydroxysteroid dehydrogenase 1 (292 aa).

Residues histidine 2–tyrosine 7 are Cytoplasmic-facing. The helical; Signal-anchor for type II membrane protein transmembrane segment at leucine 8–lysine 24 threads the bilayer. At glutamate 25–serine 292 the chain is on the lumenal side. NADP(+)-binding positions include glycine 41–serine 67, threonine 92–methionine 93, and asparagine 119–isoleucine 121. An N-linked (GlcNAc...) asparagine glycan is attached at asparagine 162. Position 170 (serine 170) interacts with substrate. Tyrosine 183 functions as the Proton acceptor in the catalytic mechanism. Tyrosine 183 to lysine 187 provides a ligand contact to NADP(+). Asparagine 207 carries an N-linked (GlcNAc...) asparagine glycan. Isoleucine 218 to threonine 222 serves as a coordination point for NADP(+).

This sequence belongs to the short-chain dehydrogenases/reductases (SDR) family. As to quaternary structure, homodimer. Detected in adrenal gland, liver, kidney, testis, and at lower levels in brain and lung (at protein level).

It localises to the endoplasmic reticulum membrane. The enzyme catalyses an 11beta-hydroxysteroid + NADP(+) = an 11-oxosteroid + NADPH + H(+). It carries out the reaction corticosterone + NADP(+) = 11-dehydrocorticosterone + NADPH + H(+). The catalysed reaction is a 7beta-hydroxysteroid + NADP(+) = a 7-oxosteroid + NADPH + H(+). It catalyses the reaction 7-oxocholesterol + NADPH + H(+) = 7beta-hydroxycholesterol + NADP(+). The enzyme catalyses 7-oxocholesterol + NADPH + H(+) = 7alpha-hydroxycholesterol + NADP(+). It carries out the reaction chenodeoxycholate + NADP(+) = 7-oxolithocholate + NADPH + H(+). The catalysed reaction is 7-oxolithocholate + NADPH + H(+) = ursodeoxycholate + NADP(+). It catalyses the reaction glycochenodeoxycholate + NADP(+) = 7-oxoglycolithocholate + NADPH + H(+). The enzyme catalyses taurochenodeoxycholate + NADP(+) = 7-oxotaurolithocholate + NADPH + H(+). It carries out the reaction tauroursodeoxycholate + NADP(+) = 7-oxotaurolithocholate + NADPH + H(+). The catalysed reaction is glycoursodeoxycholate + NADP(+) = 7-oxoglycolithocholate + NADPH + H(+). It catalyses the reaction 7-oxopregnenolone + NADPH + H(+) = 7beta-hydroxypregnenolone + NADP(+). The enzyme catalyses 3beta,7alpha-dihydroxyandrost-5-en-17-one + NADP(+) = 3beta-hydroxy-5-androstene-7,17-dione + NADPH + H(+). It carries out the reaction 3beta-hydroxy-5-androstene-7,17-dione + NADPH + H(+) = 3beta,7beta-dihydroxyandrost-5-en-17-one + NADP(+). The catalysed reaction is 3beta-hydroxy-5alpha-androstane-7,17-dione + NADPH + H(+) = 3beta,7beta-dihydroxy-5alpha-androstan-17-one + NADP(+). It participates in steroid metabolism. Controls the reversible conversion of biologically active glucocorticoids such as 11-dehydrocorticosterone to corticosterone in the presence of NADP(H). Participates in the corticosteroid receptor-mediated anti-inflammatory response, as well as metabolic and homeostatic processes. Bidirectional in vitro, predominantly functions as a reductase in vivo, thereby increasing the concentration of active glucocorticoids. It has broad substrate specificity, besides glucocorticoids, it accepts other steroid and sterol substrates. Interconverts 7-oxo- and 7-hydroxy-neurosteroids such as 7-oxopregnenolone and 7beta-hydroxypregnenolone, 7-oxodehydroepiandrosterone (3beta-hydroxy-5-androstene-7,17-dione) and 7beta-hydroxydehydroepiandrosterone (3beta,7beta-dihydroxyandrost-5-en-17-one), among others. Catalyzes reversibly the conversion of the major dietary oxysterol, 7-ketocholesterol (7-oxocholesterol), into the more polar 7-beta-hydroxycholesterol and 7-alpha-hhydroxycholesterol metabolites. 7-oxocholesterol is one of the most important oxysterols, it participates in several events such as induction of apoptosis, accumulation in atherosclerotic lesions, lipid peroxidation, and induction of foam cell formation. Mediates the 7-oxo reduction of 7-oxolithocholate mainly to chenodeoxycholate, and to a lesser extent to ursodeoxycholate, both in its free form and when conjugated to glycine or taurine, providing a link between glucocorticoid activation and bile acid metabolism. Catalyzes the synthesis of 7-beta-25-dihydroxycholesterol from 7-oxo-25-hydroxycholesterol in vitro, which acts as a ligand for the G-protein-coupled receptor (GPCR) Epstein-Barr virus-induced gene 2 (EBI2) and may thereby regulate immune cell migration. In Mesocricetus auratus (Golden hamster), this protein is 11-beta-hydroxysteroid dehydrogenase 1 (HSD11B1).